A 593-amino-acid polypeptide reads, in one-letter code: Zinc metalloproteinase-disintegrin-like kaouthiagin-like (593 aa).

The signal sequence occupies residues 1–20; the sequence is MIQALLVIICLAVFPHQGSS. Residues 21–196 constitute a propeptide that is removed on maturation; sequence IILESGNVND…KTSQFTNTPE (176 aa). A Peptidase M12B domain is found at 205-400; sequence KYIEFYVIVD…DRPQCILNKP (196 aa). Residues Glu208 and Asp292 each coordinate Ca(2+). Disulfide bonds link Cys316–Cys395, Cys356–Cys379, and Cys358–Cys363. A glycan (N-linked (GlcNAc...) asparagine) is linked at Asn319. 3 residues coordinate Zn(2+): His341, His345, and His351. Residues Cys395, Asn398, Ile410, Asn413, Phe415, Glu417, Glu420, and Asp423 each coordinate Ca(2+). In terms of domain architecture, Disintegrin spans 408 to 477; it reads PPICGNYFVE…ECPTDSLQRN (70 aa). 12 disulfide bridges follow: Cys411–Cys440, Cys422–Cys435, Cys424–Cys430, Cys434–Cys462, Cys449–Cys469, Cys456–Cys488, Cys481–Cys493, Cys500–Cys550, Cys515–Cys558, Cys528–Cys538, Cys545–Cys581, and Cys575–Cys586. The short motif at 455–457 is the D/ECD-tripeptide element; it reads DCD. Residues Asp457, Leu458, Glu460, Asp472, and Ser473 each coordinate Ca(2+). A glycan (N-linked (GlcNAc...) asparagine) is linked at Asn490.

This sequence belongs to the venom metalloproteinase (M12B) family. P-III subfamily. P-IIIa sub-subfamily. In terms of assembly, monomer. It depends on Zn(2+) as a cofactor. As to expression, expressed by the venom gland.

The protein resides in the secreted. In terms of biological role, snake venom zinc metalloproteinase that cleaves the membrane-bound precursor of TNF-alpha (TNF) into its mature soluble form showing the same digestion pattern than ADAM17. The polypeptide is Zinc metalloproteinase-disintegrin-like kaouthiagin-like (Naja atra (Chinese cobra)).